A 211-amino-acid polypeptide reads, in one-letter code: Protein-L-isoaspartate O-methyltransferase (211 aa).

S62 is a catalytic residue.

The protein belongs to the methyltransferase superfamily. L-isoaspartyl/D-aspartyl protein methyltransferase family.

Its subcellular location is the cytoplasm. The catalysed reaction is [protein]-L-isoaspartate + S-adenosyl-L-methionine = [protein]-L-isoaspartate alpha-methyl ester + S-adenosyl-L-homocysteine. Catalyzes the methyl esterification of L-isoaspartyl residues in peptides and proteins that result from spontaneous decomposition of normal L-aspartyl and L-asparaginyl residues. It plays a role in the repair and/or degradation of damaged proteins. The chain is Protein-L-isoaspartate O-methyltransferase from Shewanella oneidensis (strain ATCC 700550 / JCM 31522 / CIP 106686 / LMG 19005 / NCIMB 14063 / MR-1).